The sequence spans 372 residues: MALNDFHVSEPYTLGIELEMQVINPPGYDLSQDSSTLIDAVKPQLTAGEIKHDITESMLEMATGVCRDIDQAAAQLSAMQHVILQAASEHHLGICGGGTHPFQKWQRQEVCDNERYQRTLENFGYLIQQATVFGQHVHVGCANGDDAIYLLHGLSHFVPHFIALSAASPYMQGSDTRFACARLNIFSAFPDNGPMPWVSNWQEFAGLFRRLSYTTMIDSIKDLHWDIRPSPAFGTVEVRVMDTPLTLDHAINMAGLIQATAHWLLTERPFKPQEQDYLLYKFNRFQACRYGLEGVLTDAYTGDRRRLADDTLRLLDNVTPSARKLGADSAIDALRLQVKKGGNEAQYMREFIADGGSLIGLVQKHCEIWAGQ.

It belongs to the glutamate--cysteine ligase type 2 family. YbdK subfamily. As to quaternary structure, homodimer.

It carries out the reaction L-cysteine + L-glutamate + ATP = gamma-L-glutamyl-L-cysteine + ADP + phosphate + H(+). Functionally, ATP-dependent carboxylate-amine ligase which exhibits weak glutamate--cysteine ligase activity. This is Putative glutamate--cysteine ligase 2 (ybdK) from Salmonella heidelberg (strain SL476).